The primary structure comprises 230 residues: Geranylgeranylglyceryl phosphate synthase (230 aa).

K13 contacts sn-glycerol 1-phosphate. D15 and T41 together coordinate Mg(2+). Sn-glycerol 1-phosphate-binding positions include 161–166 (YIEYSG), G191, and 211–212 (GN).

This sequence belongs to the GGGP/HepGP synthase family. Group I subfamily. Mg(2+) is required as a cofactor.

The protein resides in the cytoplasm. The enzyme catalyses sn-glycerol 1-phosphate + (2E,6E,10E)-geranylgeranyl diphosphate = sn-3-O-(geranylgeranyl)glycerol 1-phosphate + diphosphate. Its pathway is membrane lipid metabolism; glycerophospholipid metabolism. In terms of biological role, prenyltransferase that catalyzes the transfer of the geranylgeranyl moiety of geranylgeranyl diphosphate (GGPP) to the C3 hydroxyl of sn-glycerol-1-phosphate (G1P). This reaction is the first ether-bond-formation step in the biosynthesis of archaeal membrane lipids. The polypeptide is Geranylgeranylglyceryl phosphate synthase (Methanoculleus marisnigri (strain ATCC 35101 / DSM 1498 / JR1)).